Reading from the N-terminus, the 582-residue chain is La-related protein 7 (582 aa).

N-acetylmethionine is present on methionine 1. Positions 1-27 (METESGNQEKVMEEESTEKKKEVEKKK) are disordered. Positions 10–25 (KVMEEESTEKKKEVEK) are enriched in basic and acidic residues. The HTH La-type RNA-binding domain occupies 28-122 (RSRVKQVLAD…KPLGERPKDE (95 aa)). One can recognise an RRM domain in the interval 125–203 (RTVYVELLPK…PRKPGIFPKT (79 aa)). 2 disordered regions span residues 188-368 (NPPE…ERHK) and 410-442 (KSES…RTQE). Basic residues predominate over residues 219-228 (KKKKKKKGRM). Residues 229-240 (KKEDNIQAKEEN) are compositionally biased toward basic and acidic residues. A Glycyl lysine isopeptide (Lys-Gly) (interchain with G-Cter in SUMO2) cross-link involves residue lysine 237. Threonine 257 carries the post-translational modification Phosphothreonine. Residues serine 258, serine 261, serine 273, serine 298, serine 299, and serine 300 each carry the phosphoserine modification. Over residues 316–335 (IQKDIIKEASEASKENRDIE) the composition is skewed to basic and acidic residues. Serine 337 bears the Phosphoserine mark. Phosphothreonine is present on threonine 338. Position 351 is a phosphoserine (serine 351). Residues 354-367 (KTKRKHKKKHKERH) show a composition bias toward basic residues. Lysine 410 is covalently cross-linked (Glycyl lysine isopeptide (Lys-Gly) (interchain with G-Cter in SUMO2)). A compositionally biased stretch (basic and acidic residues) spans 428 to 442 (KNEKTANREECRTQE). The xRRM domain maps to 450-563 (QFVSGVIVKI…TEKLITKAEK (114 aa)).

The protein belongs to the LARP7 family. Core component of the 7SK RNP complex, at least composed of 7SK RNA, LARP7, MEPCE, HEXIM1 (or HEXIM2) and P-TEFb (composed of CDK9 and CCNT1/cyclin-T1). Interacts with METTL16. Interacts with RBM7; upon genotoxic stress this interaction is enhanced, triggering the release of inactive P-TEFb complex from the core, yielding to P-TEFb complex activation. Associates with box C/D small nucleolar ribonucleoprotein (snoRNP) complexes.

It localises to the nucleus. The protein localises to the nucleoplasm. Functionally, RNA-binding protein that specifically binds distinct small nuclear RNA (snRNAs) and regulates their processing and function. Specifically binds the 7SK snRNA (7SK RNA) and acts as a core component of the 7SK ribonucleoprotein (RNP) complex, thereby acting as a negative regulator of transcription elongation by RNA polymerase II. The 7SK RNP complex sequesters the positive transcription elongation factor b (P-TEFb) in a large inactive 7SK RNP complex preventing RNA polymerase II phosphorylation and subsequent transcriptional elongation. The 7SK RNP complex also promotes snRNA gene transcription by RNA polymerase II via interaction with the little elongation complex (LEC). LARP7 specifically binds to the highly conserved 3'-terminal U-rich stretch of 7SK RNA; on stimulation, remains associated with 7SK RNA, whereas P-TEFb is released from the complex. LARP7 also acts as a regulator of mRNA splicing fidelity by promoting U6 snRNA processing. Specifically binds U6 snRNAs and associates with a subset of box C/D RNP complexes: promotes U6 snRNA 2'-O-methylation by facilitating U6 snRNA loading into box C/D RNP complexes. U6 snRNA 2'-O-methylation is required for mRNA splicing fidelity. Binds U6 snRNAs with a 5'-CAGGG-3' sequence motif. U6 snRNA processing is required for spermatogenesis. In Homo sapiens (Human), this protein is La-related protein 7.